A 603-amino-acid polypeptide reads, in one-letter code: DNA mismatch repair protein MutL (603 aa).

The segment covering 336–346 (EVSKKQKEQQK) has biased composition (basic and acidic residues). The disordered stretch occupies residues 336-372 (EVSKKQKEQQKSEQIQMSFEENRQPKEPPTLFSKPNI).

Belongs to the DNA mismatch repair MutL/HexB family.

Its function is as follows. This protein is involved in the repair of mismatches in DNA. It is required for dam-dependent methyl-directed DNA mismatch repair. May act as a 'molecular matchmaker', a protein that promotes the formation of a stable complex between two or more DNA-binding proteins in an ATP-dependent manner without itself being part of a final effector complex. This chain is DNA mismatch repair protein MutL, found in Listeria innocua serovar 6a (strain ATCC BAA-680 / CLIP 11262).